The sequence spans 72 residues: MSKNSLEERLAELEMRLAFQDELINTLSDQVAKQEMDIRELWDAKKMLHKQLKDISPSNIRREEEETPPPHY.

The interval 53 to 72 (KDISPSNIRREEEETPPPHY) is disordered.

Belongs to the SlyX family.

The sequence is that of Protein SlyX homolog from Marinobacter nauticus (strain ATCC 700491 / DSM 11845 / VT8) (Marinobacter aquaeolei).